We begin with the raw amino-acid sequence, 91 residues long: Large ribosomal subunit protein bL31B (91 aa).

The protein belongs to the bacterial ribosomal protein bL31 family. Type B subfamily. In terms of assembly, part of the 50S ribosomal subunit.

The sequence is that of Large ribosomal subunit protein bL31B from Neisseria gonorrhoeae (strain ATCC 700825 / FA 1090).